A 278-amino-acid chain; its full sequence is Undecaprenyl-diphosphatase 1 (278 aa).

The next 6 helical transmembrane spans lie at 45–65, 95–115, 119–139, 191–211, 225–245, and 256–276; these read AVIG…LVYF, WWVI…KPLI, LASL…MWWA, VAAT…AGLY, PLAV…AWLL, and FVVY…TGVL.

It belongs to the UppP family.

Its subcellular location is the cell membrane. It carries out the reaction di-trans,octa-cis-undecaprenyl diphosphate + H2O = di-trans,octa-cis-undecaprenyl phosphate + phosphate + H(+). Its function is as follows. Catalyzes the dephosphorylation of undecaprenyl diphosphate (UPP). Confers resistance to bacitracin. The sequence is that of Undecaprenyl-diphosphatase 1 from Streptomyces coelicolor (strain ATCC BAA-471 / A3(2) / M145).